The primary structure comprises 547 residues: Chaperonin GroEL (547 aa).

ATP is bound by residues 30–33, Lys51, 87–91, Gly415, and Asp496; these read TLGP and DGTTT.

The protein belongs to the chaperonin (HSP60) family. In terms of assembly, forms a cylinder of 14 subunits composed of two heptameric rings stacked back-to-back. Interacts with the co-chaperonin GroES.

The protein resides in the cytoplasm. It carries out the reaction ATP + H2O + a folded polypeptide = ADP + phosphate + an unfolded polypeptide.. Functionally, together with its co-chaperonin GroES, plays an essential role in assisting protein folding. The GroEL-GroES system forms a nano-cage that allows encapsulation of the non-native substrate proteins and provides a physical environment optimized to promote and accelerate protein folding. This is Chaperonin GroEL from Histophilus somni (strain 129Pt) (Haemophilus somnus).